A 355-amino-acid polypeptide reads, in one-letter code: Dual-specificity RNA methyltransferase RlmN (355 aa).

Glu86 serves as the catalytic Proton acceptor. One can recognise a Radical SAM core domain in the interval 105–338 (KEARYTVCVS…CTIRESKGLD (234 aa)). Cys112 and Cys343 are joined by a disulfide. 3 residues coordinate [4Fe-4S] cluster: Cys119, Cys123, and Cys126. Residues 169 to 170 (GE), Ser201, 224 to 226 (SLH), and Asn300 each bind S-adenosyl-L-methionine. Cys343 serves as the catalytic S-methylcysteine intermediate.

It belongs to the radical SAM superfamily. RlmN family. Requires [4Fe-4S] cluster as cofactor.

Its subcellular location is the cytoplasm. The enzyme catalyses adenosine(2503) in 23S rRNA + 2 reduced [2Fe-2S]-[ferredoxin] + 2 S-adenosyl-L-methionine = 2-methyladenosine(2503) in 23S rRNA + 5'-deoxyadenosine + L-methionine + 2 oxidized [2Fe-2S]-[ferredoxin] + S-adenosyl-L-homocysteine. The catalysed reaction is adenosine(37) in tRNA + 2 reduced [2Fe-2S]-[ferredoxin] + 2 S-adenosyl-L-methionine = 2-methyladenosine(37) in tRNA + 5'-deoxyadenosine + L-methionine + 2 oxidized [2Fe-2S]-[ferredoxin] + S-adenosyl-L-homocysteine. Functionally, specifically methylates position 2 of adenine 2503 in 23S rRNA and position 2 of adenine 37 in tRNAs. m2A2503 modification seems to play a crucial role in the proofreading step occurring at the peptidyl transferase center and thus would serve to optimize ribosomal fidelity. The polypeptide is Dual-specificity RNA methyltransferase RlmN (Nitratiruptor sp. (strain SB155-2)).